The chain runs to 342 residues: Holliday junction branch migration complex subunit RuvB (342 aa).

A large ATPase domain (RuvB-L) region spans residues 1 to 184 (MDNERVITAV…FGIVQRLEFY (184 aa)). Residues isoleucine 23, arginine 24, glycine 65, lysine 68, threonine 69, threonine 70, 131-133 (EDY), arginine 174, tyrosine 184, and arginine 221 contribute to the ATP site. Threonine 69 serves as a coordination point for Mg(2+). A small ATPAse domain (RuvB-S) region spans residues 185–255 (SVDDLSGIVS…IAQRALDMLE (71 aa)). The segment at 258–342 (SCGLDGTDRR…PRQDGDLFND (85 aa)) is head domain (RuvB-H). DNA contacts are provided by arginine 313 and arginine 318.

Belongs to the RuvB family. In terms of assembly, homohexamer. Forms an RuvA(8)-RuvB(12)-Holliday junction (HJ) complex. HJ DNA is sandwiched between 2 RuvA tetramers; dsDNA enters through RuvA and exits via RuvB. An RuvB hexamer assembles on each DNA strand where it exits the tetramer. Each RuvB hexamer is contacted by two RuvA subunits (via domain III) on 2 adjacent RuvB subunits; this complex drives branch migration. In the full resolvosome a probable DNA-RuvA(4)-RuvB(12)-RuvC(2) complex forms which resolves the HJ.

The protein resides in the cytoplasm. It catalyses the reaction ATP + H2O = ADP + phosphate + H(+). Functionally, the RuvA-RuvB-RuvC complex processes Holliday junction (HJ) DNA during genetic recombination and DNA repair, while the RuvA-RuvB complex plays an important role in the rescue of blocked DNA replication forks via replication fork reversal (RFR). RuvA specifically binds to HJ cruciform DNA, conferring on it an open structure. The RuvB hexamer acts as an ATP-dependent pump, pulling dsDNA into and through the RuvAB complex. RuvB forms 2 homohexamers on either side of HJ DNA bound by 1 or 2 RuvA tetramers; 4 subunits per hexamer contact DNA at a time. Coordinated motions by a converter formed by DNA-disengaged RuvB subunits stimulates ATP hydrolysis and nucleotide exchange. Immobilization of the converter enables RuvB to convert the ATP-contained energy into a lever motion, pulling 2 nucleotides of DNA out of the RuvA tetramer per ATP hydrolyzed, thus driving DNA branch migration. The RuvB motors rotate together with the DNA substrate, which together with the progressing nucleotide cycle form the mechanistic basis for DNA recombination by continuous HJ branch migration. Branch migration allows RuvC to scan DNA until it finds its consensus sequence, where it cleaves and resolves cruciform DNA. The chain is Holliday junction branch migration complex subunit RuvB from Alcanivorax borkumensis (strain ATCC 700651 / DSM 11573 / NCIMB 13689 / SK2).